A 277-amino-acid chain; its full sequence is Large ribosomal subunit protein uL2 (277 aa).

Disordered stretches follow at residues 37–59 and 221–265; these read KNST…GGHK and RGTA…KRTD. Positions 50-59 are enriched in basic residues; that stretch reads TTRHRGGGHK. The span at 229 to 241 shows a compositional bias: basic and acidic residues; that stretch reads DHPHGGGEGRTGE.

It belongs to the universal ribosomal protein uL2 family. In terms of assembly, part of the 50S ribosomal subunit. Forms a bridge to the 30S subunit in the 70S ribosome.

In terms of biological role, one of the primary rRNA binding proteins. Required for association of the 30S and 50S subunits to form the 70S ribosome, for tRNA binding and peptide bond formation. It has been suggested to have peptidyltransferase activity; this is somewhat controversial. Makes several contacts with the 16S rRNA in the 70S ribosome. This Chromobacterium violaceum (strain ATCC 12472 / DSM 30191 / JCM 1249 / CCUG 213 / NBRC 12614 / NCIMB 9131 / NCTC 9757 / MK) protein is Large ribosomal subunit protein uL2.